Here is a 69-residue protein sequence, read N- to C-terminus: MNSANPCCDPITCKPKKGEHCVSGPCCRNCKFLNPGTICKKGRGDNLNDYCTGVSSDCPRNPWKSEEED.

One can recognise a Disintegrin domain in the interval 1–66 (MNSANPCCDP…DCPRNPWKSE (66 aa)). Disulfide bonds link C7-C30, C21-C27, C26-C51, and C39-C58. Residues 43–45 (RGD) carry the Cell attachment site motif.

The protein belongs to the disintegrin family. Dimeric disintegrin subfamily. As to quaternary structure, heterodimer with EMF10B; disulfide-linked. As to expression, expressed by the venom gland.

It localises to the secreted. Functionally, extremely potent and selective inhibitor of integrin alpha-5/beta-1 (ITGA5/ITGB1). Partially inhibits adhesion of cells expressing alpha-IIb/beta-3 (ITGA2B/ITGB3), alpha-V/beta-3 (ITGAV/ITGB3), and alpha-4/beta-1 (ITGA4/ITGB1) to appropriate ligands only at concentration higher than 500 nM. Weakly inhibits ADP-induced platelet aggregation. The sequence is that of Disintegrin EMF10A from Eristicophis macmahoni (Leaf-nosed viper).